The following is a 367-amino-acid chain: Protein SUPPRESSOR OF FRI 4 (367 aa).

Residues 7–66 (RATEKVWCYYCDREFDDEKILVQHQKAKHFKCHVCHKKLSTASGMVIHVLQVHKENVTKV) form a BED-type zinc finger. Zn(2+) contacts are provided by cysteine 38, cysteine 41, histidine 54, and histidine 59. The segment at 246 to 309 (PFSAPLPVGG…PPVIANKAPS (64 aa)) is disordered. Polar residues predominate over residues 273–295 (PNNSIPGGTNAHSYASGPNTSGP).

In terms of assembly, homodimer. Component of the transcription activator complex FRI-C composed of FRI, FRL1, SUF4, FLX and FES1. Interacts with LD, ASHH2, FRL1, (via C-terminus) with FRI (via C-terminus), and with SWC6, a component of the SWR1 chromatin-remodeling complex. Binds to MED18 to regulate flowering time; recruits MED18 to FLC promoter. In terms of tissue distribution, expressed in root, shoot apex, leaves, stem and flowers. Expressed in expanding leaves, in the vasculature of fully expanded leaves, in the inflorescence, throughout young floral primordia, in the carpels of older flowers and in fertilized ovules.

The protein localises to the nucleus. Sequence-specific DNA binding factor that recognizes the 5'-CCAAATTTTAAGTTT-3' sequence. Recruits the FRI-C complex to the FLC promoter. Required for FRI-mediated FLC activation, but has no effect on the expression of MAF1, MAF2, MAF3, MAF5, UFC and CO. Dispensable for the reactivation of FLC in early embryogenesis, but required to maintain high levels of FLC expression in later embryonic and vegetative development. The sequence is that of Protein SUPPRESSOR OF FRI 4 from Arabidopsis thaliana (Mouse-ear cress).